The primary structure comprises 261 residues: Cytochrome c oxidase subunit 3 (261 aa).

Over 1–15 the chain is Mitochondrial matrix; it reads MTHQTHAYHMVNPSP. The helical transmembrane segment at 16–34 threads the bilayer; sequence WPLTGALSALLMTSGLAMW. Over 35–40 the chain is Mitochondrial intermembrane; sequence FHFNSP. A helical transmembrane segment spans residues 41–66; sequence SLLLIGLVTNTLTMYQWWRDIVREGT. Topologically, residues 67-72 are mitochondrial matrix; the sequence is FQGHHT. Residues 73-105 form a helical membrane-spanning segment; sequence PIVQKGLRYGMILFIISEVFFFAGFFWAFYHSS. Over 106–128 the chain is Mitochondrial intermembrane; that stretch reads LAPTPELGGCWPPTGINPLNPLE. Residues 129–152 traverse the membrane as a helical segment; that stretch reads VPLLNTSVLLASGVSITWAHHSLM. Residues 153-155 lie on the Mitochondrial matrix side of the membrane; the sequence is EGN. A helical membrane pass occupies residues 156 to 183; sequence RKNMQQALAITILLGIYFTLLQASEYYE. The Mitochondrial intermembrane portion of the chain corresponds to 184 to 190; the sequence is TSFTISD. Residues 191–223 form a helical membrane-spanning segment; it reads GVYGSTFFMATGFHGLHVIIGSTFLTVCLLRQF. Topologically, residues 224-232 are mitochondrial matrix; it reads NFHFTSNHH. A helical membrane pass occupies residues 233 to 256; that stretch reads FGFEAAAWYWHFVDVVWLFLYVSI. At 257–261 the chain is on the mitochondrial intermembrane side; the sequence is YWWGS.

It belongs to the cytochrome c oxidase subunit 3 family. Component of the cytochrome c oxidase (complex IV, CIV), a multisubunit enzyme composed of 14 subunits. The complex is composed of a catalytic core of 3 subunits MT-CO1, MT-CO2 and MT-CO3, encoded in the mitochondrial DNA, and 11 supernumerary subunits COX4I, COX5A, COX5B, COX6A, COX6B, COX6C, COX7A, COX7B, COX7C, COX8 and NDUFA4, which are encoded in the nuclear genome. The complex exists as a monomer or a dimer and forms supercomplexes (SCs) in the inner mitochondrial membrane with NADH-ubiquinone oxidoreductase (complex I, CI) and ubiquinol-cytochrome c oxidoreductase (cytochrome b-c1 complex, complex III, CIII), resulting in different assemblies (supercomplex SCI(1)III(2)IV(1) and megacomplex MCI(2)III(2)IV(2)).

The protein localises to the mitochondrion inner membrane. The enzyme catalyses 4 Fe(II)-[cytochrome c] + O2 + 8 H(+)(in) = 4 Fe(III)-[cytochrome c] + 2 H2O + 4 H(+)(out). Component of the cytochrome c oxidase, the last enzyme in the mitochondrial electron transport chain which drives oxidative phosphorylation. The respiratory chain contains 3 multisubunit complexes succinate dehydrogenase (complex II, CII), ubiquinol-cytochrome c oxidoreductase (cytochrome b-c1 complex, complex III, CIII) and cytochrome c oxidase (complex IV, CIV), that cooperate to transfer electrons derived from NADH and succinate to molecular oxygen, creating an electrochemical gradient over the inner membrane that drives transmembrane transport and the ATP synthase. Cytochrome c oxidase is the component of the respiratory chain that catalyzes the reduction of oxygen to water. Electrons originating from reduced cytochrome c in the intermembrane space (IMS) are transferred via the dinuclear copper A center (CU(A)) of subunit 2 and heme A of subunit 1 to the active site in subunit 1, a binuclear center (BNC) formed by heme A3 and copper B (CU(B)). The BNC reduces molecular oxygen to 2 water molecules using 4 electrons from cytochrome c in the IMS and 4 protons from the mitochondrial matrix. The chain is Cytochrome c oxidase subunit 3 (MT-CO3) from Oryctolagus cuniculus (Rabbit).